We begin with the raw amino-acid sequence, 604 residues long: Aspartate--tRNA(Asp/Asn) ligase (604 aa).

Glu-168 is an L-aspartate binding site. The tract at residues 192–195 (QLFK) is aspartate. L-aspartate is bound at residue Arg-214. ATP-binding positions include 214 to 216 (RDE) and Gln-223. Residue His-446 participates in L-aspartate binding. Residue Glu-480 coordinates ATP. Arg-487 contributes to the L-aspartate binding site. Residue 532–535 (GWDR) participates in ATP binding. The interval 575–604 (LEAGVDARPKPEARAQAGTAGPAAPVADPT) is disordered. Over residues 577–587 (AGVDARPKPEA) the composition is skewed to basic and acidic residues. Low complexity predominate over residues 588-604 (RAQAGTAGPAAPVADPT).

This sequence belongs to the class-II aminoacyl-tRNA synthetase family. Type 1 subfamily. Homodimer.

It localises to the cytoplasm. It carries out the reaction tRNA(Asx) + L-aspartate + ATP = L-aspartyl-tRNA(Asx) + AMP + diphosphate. Functionally, aspartyl-tRNA synthetase with relaxed tRNA specificity since it is able to aspartylate not only its cognate tRNA(Asp) but also tRNA(Asn). Reaction proceeds in two steps: L-aspartate is first activated by ATP to form Asp-AMP and then transferred to the acceptor end of tRNA(Asp/Asn). The polypeptide is Aspartate--tRNA(Asp/Asn) ligase (Salinispora arenicola (strain CNS-205)).